The chain runs to 327 residues: DNA-directed RNA polymerase subunit alpha (327 aa).

The tract at residues 1–243 is alpha N-terminal domain (alpha-NTD); that stretch reads MEKFLKYEIK…EHLNPIVNVN (243 aa). The interval 260–327 is alpha C-terminal domain (alpha-CTD); it reads RVRSFAKQIE…VHELGLKLRS (68 aa).

The protein belongs to the RNA polymerase alpha chain family. As to quaternary structure, homodimer. The RNAP catalytic core consists of 2 alpha, 1 beta, 1 beta' and 1 omega subunit. When a sigma factor is associated with the core the holoenzyme is formed, which can initiate transcription.

The catalysed reaction is RNA(n) + a ribonucleoside 5'-triphosphate = RNA(n+1) + diphosphate. DNA-dependent RNA polymerase catalyzes the transcription of DNA into RNA using the four ribonucleoside triphosphates as substrates. This chain is DNA-directed RNA polymerase subunit alpha, found in Mycoplasma pneumoniae (strain ATCC 29342 / M129 / Subtype 1) (Mycoplasmoides pneumoniae).